The primary structure comprises 158 residues: Anti-tumor lectin (158 aa).

Blocked amino end (Gln) is present on Gln-1. A Galectin domain is found at 12–155; sequence TSVDLAAPVT…STVVEAVTYT (144 aa). Residues Asn-43, His-59, Arg-63, Asn-72, Arg-74, Trp-80, and Glu-83 each coordinate N-acetyl-alpha-neuraminyl-(2-&gt;3)-beta-D-galactosyl-(1-&gt;4)-beta-D-glucose.

As to quaternary structure, homodimer. As to expression, detected in the fruiting body.

Functionally, anti-tumor lectin with DNase activity. Inhibits the growth of several tumor cell lines in vitro. Induces lymphocyte infiltration and necrosis of tumor cells in a mouse tumor model. Induces apoptosis in HeLa cells. Binds N-acetylneuraminyl lactose (N-acetyl-alpha-neuraminyl-(2-&gt;3)-beta-D-galactosyl-(1-&gt;4)-beta-D-glucose). This is Anti-tumor lectin from Cyclocybe aegerita (Black poplar mushroom).